An 878-amino-acid polypeptide reads, in one-letter code: DNA mismatch repair protein MutS (878 aa).

Position 629 to 636 (629 to 636) interacts with ATP; that stretch reads GPNMAGKS.

The protein belongs to the DNA mismatch repair MutS family.

Functionally, this protein is involved in the repair of mismatches in DNA. It is possible that it carries out the mismatch recognition step. This protein has a weak ATPase activity. In Roseobacter denitrificans (strain ATCC 33942 / OCh 114) (Erythrobacter sp. (strain OCh 114)), this protein is DNA mismatch repair protein MutS.